Consider the following 220-residue polypeptide: Cytidylate kinase (220 aa).

Residue 9-17 (GPAASGKST) coordinates ATP.

This sequence belongs to the cytidylate kinase family. Type 1 subfamily.

The protein resides in the cytoplasm. The catalysed reaction is CMP + ATP = CDP + ADP. It carries out the reaction dCMP + ATP = dCDP + ADP. The chain is Cytidylate kinase from Thermotoga petrophila (strain ATCC BAA-488 / DSM 13995 / JCM 10881 / RKU-1).